The following is a 486-amino-acid chain: FAD-dependent oxidoreductase domain-containing protein 1 (486 aa).

The chain crosses the membrane as a helical span at residues 66–82 (VVIVGGGVLGLSVAYWL).

As to quaternary structure, associates with components of the mitochondrial respiratory chain complex I. FAD is required as a cofactor.

The protein resides in the mitochondrion inner membrane. In terms of biological role, required for the assembly of the mitochondrial membrane respiratory chain NADH dehydrogenase (Complex I). Involved in mid-late stages of complex I assembly. This chain is FAD-dependent oxidoreductase domain-containing protein 1 (FOXRED1), found in Bos taurus (Bovine).